Consider the following 327-residue polypeptide: Aspartate--ammonia ligase (327 aa).

The protein belongs to the class-II aminoacyl-tRNA synthetase family. AsnA subfamily.

The protein localises to the cytoplasm. It catalyses the reaction L-aspartate + NH4(+) + ATP = L-asparagine + AMP + diphosphate + H(+). Its pathway is amino-acid biosynthesis; L-asparagine biosynthesis; L-asparagine from L-aspartate (ammonia route): step 1/1. This Mycoplasmoides gallisepticum (strain R(low / passage 15 / clone 2)) (Mycoplasma gallisepticum) protein is Aspartate--ammonia ligase.